The sequence spans 357 residues: Isopentenyl-diphosphate delta-isomerase (357 aa).

A substrate-binding site is contributed by arginine 13 to lysine 14. FMN contacts are provided by residues serine 71, serine 72–threonine 74, serine 102, and asparagine 131. Residue serine 102–arginine 104 participates in substrate binding. Glutamine 166 is a binding site for substrate. A Mg(2+)-binding site is contributed by glutamate 167. Residues lysine 198 and alanine 311 to arginine 312 each bind FMN.

Belongs to the IPP isomerase type 2 family. As to quaternary structure, homooctamer. Dimer of tetramers. It depends on FMN as a cofactor. NADPH is required as a cofactor. Requires Mg(2+) as cofactor.

The protein resides in the cytoplasm. It catalyses the reaction isopentenyl diphosphate = dimethylallyl diphosphate. Involved in the biosynthesis of isoprenoids. Catalyzes the 1,3-allylic rearrangement of the homoallylic substrate isopentenyl (IPP) to its allylic isomer, dimethylallyl diphosphate (DMAPP). The chain is Isopentenyl-diphosphate delta-isomerase from Chlorobium chlorochromatii (strain CaD3).